The chain runs to 248 residues: UPF0246 protein lp_0089 (248 aa).

The protein belongs to the UPF0246 family.

This Lactiplantibacillus plantarum (strain ATCC BAA-793 / NCIMB 8826 / WCFS1) (Lactobacillus plantarum) protein is UPF0246 protein lp_0089.